A 118-amino-acid chain; its full sequence is NAD(P)H-quinone oxidoreductase subunit M (118 aa).

It belongs to the complex I NdhM subunit family. NDH-1 can be composed of about 15 different subunits; different subcomplexes with different compositions have been identified which probably have different functions.

The protein localises to the cellular thylakoid membrane. The catalysed reaction is a plastoquinone + NADH + (n+1) H(+)(in) = a plastoquinol + NAD(+) + n H(+)(out). The enzyme catalyses a plastoquinone + NADPH + (n+1) H(+)(in) = a plastoquinol + NADP(+) + n H(+)(out). Functionally, NDH-1 shuttles electrons from an unknown electron donor, via FMN and iron-sulfur (Fe-S) centers, to quinones in the respiratory and/or the photosynthetic chain. The immediate electron acceptor for the enzyme in this species is believed to be plastoquinone. Couples the redox reaction to proton translocation, and thus conserves the redox energy in a proton gradient. Cyanobacterial NDH-1 also plays a role in inorganic carbon-concentration. In Rippkaea orientalis (strain PCC 8801 / RF-1) (Cyanothece sp. (strain PCC 8801)), this protein is NAD(P)H-quinone oxidoreductase subunit M.